We begin with the raw amino-acid sequence, 182 residues long: Adenine phosphoribosyltransferase (182 aa).

The protein belongs to the purine/pyrimidine phosphoribosyltransferase family. In terms of assembly, homodimer.

The protein localises to the cytoplasm. The catalysed reaction is AMP + diphosphate = 5-phospho-alpha-D-ribose 1-diphosphate + adenine. It participates in purine metabolism; AMP biosynthesis via salvage pathway; AMP from adenine: step 1/1. Its function is as follows. Catalyzes a salvage reaction resulting in the formation of AMP, that is energically less costly than de novo synthesis. The sequence is that of Adenine phosphoribosyltransferase from Koribacter versatilis (strain Ellin345).